Here is a 90-residue protein sequence, read N- to C-terminus: Large ribosomal subunit protein bL27 (90 aa).

The tract at residues 1 to 21 (MASKKAGGSTRNGRDSEAKRL) is disordered.

It belongs to the bacterial ribosomal protein bL27 family.

This chain is Large ribosomal subunit protein bL27, found in Neisseria gonorrhoeae (strain ATCC 700825 / FA 1090).